Here is a 355-residue protein sequence, read N- to C-terminus: uncharacterized protein (355 aa).

Disordered stretches follow at residues 1-121, 226-253, and 336-355; these read MPID…MELR, RLMNSEEREAQDLKDAEASRRGKKKSSM, and NLHRLGGLHSDSPLSKRKRT. Acidic residues predominate over residues 24 to 37; sequence LESESSSESDYEEV. Residues 65–87 show a composition bias toward polar residues; it reads ETKTSSNFQNINPVQTIDNSASE. Over residues 91–105 the composition is skewed to low complexity; it reads DASSAEGGSNSAASS. Residues 106 to 117 show a composition bias toward acidic residues; the sequence is SEEEDSSDSEYE. Basic and acidic residues predominate over residues 226 to 245; the sequence is RLMNSEEREAQDLKDAEASR.

This is an uncharacterized protein from Schizosaccharomyces pombe (strain 972 / ATCC 24843) (Fission yeast).